We begin with the raw amino-acid sequence, 288 residues long: Ninja-family protein 6 (288 aa).

Disordered regions lie at residues 1 to 50 (MASR…KRPR) and 66 to 207 (LHAD…TRTG). Residues 12–23 (AGEGAGPPGDAG) are compositionally biased toward gly residues. Residues 76–86 (LPLLRTTSLPT) show a composition bias toward low complexity. Residues 91–103 (ERWRRREMQSRRR) are compositionally biased toward basic and acidic residues. A compositionally biased stretch (polar residues) spans 131–173 (RRSNASQGSNSASTTEQGIGGSMFNQSADAKSPSTSDNRNQND). The span at 195–207 (RLRTLGSLTTRTG) shows a compositional bias: low complexity.

This sequence belongs to the Ninja family.

It localises to the nucleus. This Zea mays (Maize) protein is Ninja-family protein 6.